A 622-amino-acid chain; its full sequence is Golgin subfamily A member 6-like protein 7 (622 aa).

3 disordered regions span residues 1–82 (MMSE…QQAL), 251–496 (RKHE…RKQV), and 511–580 (EKMQ…HDNR). Basic and acidic residues-rich tracts occupy residues 57 to 74 (SPED…ENKA), 251 to 275 (RKHE…REQE), 283 to 332 (EQMR…KQEE), 339 to 367 (EQMR…KQEE), 374 to 388 (EQMR…KQEE), and 395 to 420 (EQMR…KQEE). Residues 100 to 534 (KTELETALHD…EKRREKKERM (435 aa)) adopt a coiled-coil conformation. Over residues 477 to 489 (QMGEQEEQMGEQE) the composition is skewed to acidic residues. Basic and acidic residues-rich tracts occupy residues 511-546 (EKMQ…ERCS) and 567-580 (PARE…HDNR).

It belongs to the GOLGA6 family.

This Homo sapiens (Human) protein is Golgin subfamily A member 6-like protein 7.